The sequence spans 387 residues: MTAPYASDPQRARGRRVKEEESTFRSSFQRDRDRIIHASAFRRLKHKTQVFIEHEGDYYRTRLTHSIEVAQVARTIAGALNLNQELTEAVALAHDLGHTPFGHTGEDALSDMMAPYGGFDHNAQAIRIVTHLERHYADFDGLNLTWETLEGLAKHNGPVTGDIPWALKAYNDTHDLELGTFASAEAQVAAIADDVAYNHHDLHDGLRAELFSTDELAELPILNMCFAEVDRLYPGLNYYRRRHEALRRFFGVLVEDVIQLAQARLMTLQPKTVTDIRAADRAIIRFSDDVFDDLKVIRSFLFDRMYRAPSVVVMRAQVTRVVEELFPHFMAHPDQLPKQWRKDVEAISSETELARIVSDYISGMTDRFALQEHARLIHGTTPTETER.

Residues 1–26 (MTAPYASDPQRARGRRVKEEESTFRS) are disordered. Residues 17–26 (VKEEESTFRS) show a composition bias toward basic and acidic residues. One can recognise an HD domain in the interval 62 to 198 (RLTHSIEVAQ…AAIADDVAYN (137 aa)).

Belongs to the dGTPase family. Type 2 subfamily.

This is Deoxyguanosinetriphosphate triphosphohydrolase-like protein from Roseobacter denitrificans (strain ATCC 33942 / OCh 114) (Erythrobacter sp. (strain OCh 114)).